Reading from the N-terminus, the 427-residue chain is Peptidase B (427 aa).

Residues Lys195 and Asp200 each coordinate Mn(2+). The active site involves Lys207. 3 residues coordinate Mn(2+): Asp218, Asp277, and Glu279. Arg281 is a catalytic residue.

The protein belongs to the peptidase M17 family. As to quaternary structure, homohexamer. The cofactor is Mn(2+).

It localises to the cytoplasm. It catalyses the reaction Release of an N-terminal amino acid, Xaa, from a peptide or arylamide. Xaa is preferably Glu or Asp but may be other amino acids, including Leu, Met, His, Cys and Gln.. Its function is as follows. Probably plays an important role in intracellular peptide degradation. The chain is Peptidase B from Escherichia coli (strain SE11).